The chain runs to 262 residues: Carbonic anhydrase 1 (262 aa).

At A2 the chain carries N-acetylalanine. The 258-residue stretch at 4 to 261 (LNWSYEGENG…LKGRQVKASF (258 aa)) folds into the Alpha-carbonic anhydrase domain. Residue H65 is the Proton donor/acceptor of the active site. Zn(2+)-binding residues include H95, H97, and H120. Substrate-binding positions include T200 and 200–201 (TH).

It belongs to the alpha-carbonic anhydrase family. Requires Zn(2+) as cofactor.

It is found in the cytoplasm. It carries out the reaction hydrogencarbonate + H(+) = CO2 + H2O. It catalyses the reaction urea = cyanamide + H2O. With respect to regulation, inhibited by acetazolamide. In terms of biological role, catalyzes the reversible hydration of carbon dioxide. Can hydrate cyanamide to urea. This chain is Carbonic anhydrase 1 (CA1), found in Monodelphis domestica (Gray short-tailed opossum).